We begin with the raw amino-acid sequence, 260 residues long: Proteasome subunit alpha (260 aa).

This sequence belongs to the peptidase T1A family. In terms of assembly, the 20S proteasome core is composed of 14 alpha and 14 beta subunits that assemble into four stacked heptameric rings, resulting in a barrel-shaped structure. The two inner rings, each composed of seven catalytic beta subunits, are sandwiched by two outer rings, each composed of seven alpha subunits. The catalytic chamber with the active sites is on the inside of the barrel. Has a gated structure, the ends of the cylinder being occluded by the N-termini of the alpha-subunits. Is capped at one or both ends by the proteasome regulatory ATPase, PAN.

Its subcellular location is the cytoplasm. Its activity is regulated as follows. The formation of the proteasomal ATPase PAN-20S proteasome complex, via the docking of the C-termini of PAN into the intersubunit pockets in the alpha-rings, triggers opening of the gate for substrate entry. Interconversion between the open-gate and close-gate conformations leads to a dynamic regulation of the 20S proteasome proteolysis activity. Functionally, component of the proteasome core, a large protease complex with broad specificity involved in protein degradation. The protein is Proteasome subunit alpha of Thermococcus kodakarensis (strain ATCC BAA-918 / JCM 12380 / KOD1) (Pyrococcus kodakaraensis (strain KOD1)).